The sequence spans 811 residues: DEAD-box ATP-dependent RNA helicase 48 (811 aa).

2 disordered regions span residues 1–32 (MGGGPRTFPGGLSKWQHKRMHEKLARHKERGL) and 93–138 (DDGP…EPRL). Residues 15-29 (WQHKRMHEKLARHKE) show a composition bias toward basic residues. 2 stretches are compositionally biased toward basic and acidic residues: residues 95 to 104 (GPIHRADRPR) and 117 to 138 (GDRRKLDSTKQELPRGGKEPRL). Positions 286–333 (RNCDMKKERRALKSYEEENNDLAGSFRELREEIKNREVLGAERRRYES) form a coiled coil. A Q motif motif is present at residues 342–370 (KRFEECGISPLTVKALTDAGYVQTTVVQE). Residues 373–556 (LPMCLEGKDV…QLVLKRDHVF (184 aa)) form the Helicase ATP-binding domain. 386-393 (AKTGTGKS) is a binding site for ATP. The DEAD box motif lies at 504–507 (DEAD). Positions 570–740 (KVEQLYLVMP…EMKRKVDGSI (171 aa)) constitute a Helicase C-terminal domain.

This sequence belongs to the DEAD box helicase family.

The catalysed reaction is ATP + H2O = ADP + phosphate + H(+). This Oryza sativa subsp. japonica (Rice) protein is DEAD-box ATP-dependent RNA helicase 48.